We begin with the raw amino-acid sequence, 450 residues long: Sensor histidine kinase EnvZ (450 aa).

The Cytoplasmic segment spans residues methionine 1–threonine 15. A helical transmembrane segment spans residues leucine 16–leucine 35. The Periplasmic portion of the chain corresponds to asparagine 36–serine 158. Residues proline 159–isoleucine 179 form a helical membrane-spanning segment. Positions arginine 180 to aspartate 232 constitute an HAMP domain. The Cytoplasmic portion of the chain corresponds to arginine 180–alanine 450. The interval methionine 223–arginine 289 is cytoplasmic dimerization domain (CDD), when dimerized forms osmosensitive core. The 201-residue stretch at glycine 240–valine 440 folds into the Histidine kinase domain. ATP-binding positions include histidine 243, asparagine 347 to tyrosine 351, aspartate 373, arginine 392 to glycine 393, and threonine 402 to leucine 406. Histidine 243 carries the phosphohistidine; by autocatalysis modification.

Homodimer. Post-translationally, autophosphorylated.

The protein localises to the cell inner membrane. The catalysed reaction is ATP + protein L-histidine = ADP + protein N-phospho-L-histidine.. Its function is as follows. Member of the two-component regulatory system EnvZ/OmpR involved in regulating expression of the outer membrane porins OmpC and OmpF as well as other genes. Unlike E.coli or S.typhimurium both porins are expressed constitutively. Involved in regulation of the biosynthesis of Vi polysaccharide, a capsular antigen thought to be involved in the virulence of S.typhi. Vi antigen is synthesized at low NaCl concentrations (under 0.4 M). EnvZ functions as a membrane-associated protein kinase that phosphorylates OmpR in response to environmental signals. In Salmonella typhi, this protein is Sensor histidine kinase EnvZ (envZ).